Here is a 550-residue protein sequence, read N- to C-terminus: Dihydroxy-acid dehydratase (550 aa).

D78 contacts Mg(2+). C119 lines the [2Fe-2S] cluster pocket. Mg(2+)-binding residues include D120 and K121. An N6-carboxylysine modification is found at K121. C192 contacts [2Fe-2S] cluster. Position 440 (E440) interacts with Mg(2+). Catalysis depends on S466, which acts as the Proton acceptor.

It belongs to the IlvD/Edd family. As to quaternary structure, homodimer. Requires [2Fe-2S] cluster as cofactor. Mg(2+) is required as a cofactor.

The enzyme catalyses (2R)-2,3-dihydroxy-3-methylbutanoate = 3-methyl-2-oxobutanoate + H2O. The catalysed reaction is (2R,3R)-2,3-dihydroxy-3-methylpentanoate = (S)-3-methyl-2-oxopentanoate + H2O. The protein operates within amino-acid biosynthesis; L-isoleucine biosynthesis; L-isoleucine from 2-oxobutanoate: step 3/4. It functions in the pathway amino-acid biosynthesis; L-valine biosynthesis; L-valine from pyruvate: step 3/4. In terms of biological role, functions in the biosynthesis of branched-chain amino acids. Catalyzes the dehydration of (2R,3R)-2,3-dihydroxy-3-methylpentanoate (2,3-dihydroxy-3-methylvalerate) into 2-oxo-3-methylpentanoate (2-oxo-3-methylvalerate) and of (2R)-2,3-dihydroxy-3-methylbutanoate (2,3-dihydroxyisovalerate) into 2-oxo-3-methylbutanoate (2-oxoisovalerate), the penultimate precursor to L-isoleucine and L-valine, respectively. In Thermodesulfovibrio yellowstonii (strain ATCC 51303 / DSM 11347 / YP87), this protein is Dihydroxy-acid dehydratase.